A 284-amino-acid polypeptide reads, in one-letter code: Diaminopimelate epimerase (284 aa).

Substrate contacts are provided by asparagine 14 and asparagine 67. The active-site Proton donor is cysteine 76. Substrate-binding positions include 77 to 78, asparagine 166, asparagine 199, and 217 to 218; these read GN and ER. Cysteine 226 (proton acceptor) is an active-site residue. 227–228 lines the substrate pocket; the sequence is GT.

This sequence belongs to the diaminopimelate epimerase family. In terms of assembly, homodimer.

Its subcellular location is the cytoplasm. The enzyme catalyses (2S,6S)-2,6-diaminopimelate = meso-2,6-diaminopimelate. It participates in amino-acid biosynthesis; L-lysine biosynthesis via DAP pathway; DL-2,6-diaminopimelate from LL-2,6-diaminopimelate: step 1/1. Functionally, catalyzes the stereoinversion of LL-2,6-diaminopimelate (L,L-DAP) to meso-diaminopimelate (meso-DAP), a precursor of L-lysine and an essential component of the bacterial peptidoglycan. In Geobacillus sp. (strain WCH70), this protein is Diaminopimelate epimerase.